A 232-amino-acid chain; its full sequence is Ribonuclease 3 (232 aa).

The 130-residue stretch at 5 to 134 folds into the RNase III domain; that stretch reads QTVLKNHFAI…FLGALLLDKD (130 aa). Position 47 (glutamate 47) interacts with Mg(2+). Aspartate 51 is an active-site residue. 2 residues coordinate Mg(2+): aspartate 120 and glutamate 123. Residue glutamate 123 is part of the active site. Positions 160 to 229 constitute a DRBM domain; sequence DYKTHLQELL…AKNAVEKGLD (70 aa).

Belongs to the ribonuclease III family. Homodimer. The cofactor is Mg(2+).

The protein localises to the cytoplasm. The enzyme catalyses Endonucleolytic cleavage to 5'-phosphomonoester.. In terms of biological role, digests double-stranded RNA. Involved in the processing of primary rRNA transcript to yield the immediate precursors to the large and small rRNAs (23S and 16S). Processes some mRNAs, and tRNAs when they are encoded in the rRNA operon. Processes pre-crRNA and tracrRNA of type II CRISPR loci if present in the organism. This chain is Ribonuclease 3, found in Streptococcus pneumoniae (strain CGSP14).